Consider the following 584-residue polypeptide: tRNA-guanine(15) transglycosylase (584 aa).

The active-site Nucleophile is the aspartate 95. Substrate contacts are provided by aspartate 130 and glycine 196. Zn(2+)-binding residues include cysteine 279, cysteine 281, and cysteine 284. Positions 507 to 582 constitute a PUA domain; that stretch reads RMRVVVSEEA…RAVKVRRGIS (76 aa).

Belongs to the archaeosine tRNA-ribosyltransferase family. Requires Zn(2+) as cofactor.

The catalysed reaction is guanosine(15) in tRNA + 7-cyano-7-deazaguanine = 7-cyano-7-carbaguanosine(15) in tRNA + guanine. It functions in the pathway tRNA modification; archaeosine-tRNA biosynthesis. Its function is as follows. Exchanges the guanine residue with 7-cyano-7-deazaguanine (preQ0) at position 15 in the dihydrouridine loop (D-loop) of archaeal tRNAs. The chain is tRNA-guanine(15) transglycosylase from Pyrococcus abyssi (strain GE5 / Orsay).